Reading from the N-terminus, the 168-residue chain is Endoribonuclease YbeY (168 aa).

3 residues coordinate Zn(2+): His127, His131, and His137.

Belongs to the endoribonuclease YbeY family. Zn(2+) serves as cofactor.

It localises to the cytoplasm. Single strand-specific metallo-endoribonuclease involved in late-stage 70S ribosome quality control and in maturation of the 3' terminus of the 16S rRNA. This chain is Endoribonuclease YbeY, found in Chromobacterium violaceum (strain ATCC 12472 / DSM 30191 / JCM 1249 / CCUG 213 / NBRC 12614 / NCIMB 9131 / NCTC 9757 / MK).